Reading from the N-terminus, the 58-residue chain is Large ribosomal subunit protein bL32 (58 aa).

Positions 1 to 19 are enriched in basic residues; that stretch reads MAVPKKRTSKSKKNMRKAN. The segment at 1–58 is disordered; the sequence is MAVPKKRTSKSKKNMRKANWKNQAKLAAKKALSLGKSVETQRSHSFVHPRYEEEEEED. Over residues 20–32 the composition is skewed to low complexity; the sequence is WKNQAKLAAKKAL.

This sequence belongs to the bacterial ribosomal protein bL32 family.

This Trichodesmium erythraeum (strain IMS101) protein is Large ribosomal subunit protein bL32.